A 302-amino-acid chain; its full sequence is N-acetyl-D-glucosamine kinase (302 aa).

Residues 4-11 (GFDVGGTK) and 133-140 (GFGGGFIY) each bind ATP. Residues His-157, Cys-177, Cys-179, and Cys-184 each coordinate Zn(2+).

Belongs to the ROK (NagC/XylR) family. NagK subfamily.

The catalysed reaction is N-acetyl-D-glucosamine + ATP = N-acetyl-D-glucosamine 6-phosphate + ADP + H(+). It participates in cell wall biogenesis; peptidoglycan recycling. Catalyzes the phosphorylation of N-acetyl-D-glucosamine (GlcNAc) derived from cell-wall degradation, yielding GlcNAc-6-P. The protein is N-acetyl-D-glucosamine kinase of Vibrio parahaemolyticus serotype O3:K6 (strain RIMD 2210633).